Here is a 1397-residue protein sequence, read N- to C-terminus: Protein RhsC (1397 aa).

28 repeat units span residues Asn330–Thr352, Gly353–Ala374, Gly375–Asp417, Gly418–Ala438, Gly439–Asp460, Gly461–Asp481, Gly482–Asp502, Gly503–Thr525, Gly526–Ser546, Gly547–Glu567, Gly568–Gln588, Gly589–Asp609, Gly610–Gly629, Gly630–Asn650, Gly651–Asp671, Gly672–Glu691, Gly692–Asn711, Gly712–Glu734, Gly735–His758, Gly808–Phe828, Gly829–Ser850, Leu851–Pro871, Arg872–Asn894, Leu895–Ala930, Arg931–Thr959, Asp960–Ala984, Glu985–Ser1019, and Gly1162–Gln1186. The interval Asn330 to Gln1186 is 28 X approximate tandem repeats. Residues Gly1292–Ser1312 are disordered.

The protein belongs to the RHS family.

Its function is as follows. Rhs elements have a nonessential function. They may play an important role in the natural ecology of the cell. This chain is Protein RhsC (rhsC), found in Escherichia coli (strain K12).